We begin with the raw amino-acid sequence, 250 residues long: 2,3-bisphosphoglycerate-dependent phosphoglycerate mutase (250 aa).

Substrate contacts are provided by residues 10–17 (RHGESQWN), 23–24 (TG), Arg62, 89–92 (ERHY), Lys100, 116–117 (RR), and 185–186 (GN). The active-site Tele-phosphohistidine intermediate is His11. Glu89 functions as the Proton donor/acceptor in the catalytic mechanism.

The protein belongs to the phosphoglycerate mutase family. BPG-dependent PGAM subfamily. As to quaternary structure, homodimer.

The catalysed reaction is (2R)-2-phosphoglycerate = (2R)-3-phosphoglycerate. The protein operates within carbohydrate degradation; glycolysis; pyruvate from D-glyceraldehyde 3-phosphate: step 3/5. Functionally, catalyzes the interconversion of 2-phosphoglycerate and 3-phosphoglycerate. The chain is 2,3-bisphosphoglycerate-dependent phosphoglycerate mutase from Erwinia tasmaniensis (strain DSM 17950 / CFBP 7177 / CIP 109463 / NCPPB 4357 / Et1/99).